Consider the following 321-residue polypeptide: Transcription factor MYB60 (321 aa).

HTH myb-type domains lie at 9–65 (KVGI…RPGI) and 66–116 (KRGN…KKKI). 2 DNA-binding regions (H-T-H motif) span residues 37-61 (WRSV…TNYL) and 89-112 (WAAI…NTHL). An S-nitrosocysteine mark is found at Cys49 and Cys53. Disordered stretches follow at residues 196–215 (SPKA…EGSI) and 263–291 (HHQT…QKKH). Residues 206-215 (QNSSLEEGSI) are compositionally biased toward polar residues. Residues 273–290 (SDDHDHDHEMKMDHDQKK) are compositionally biased toward basic and acidic residues.

In terms of tissue distribution, restricted to stomatal guard cells. Mostly expressed in leaves, cotyledons, hypocotyls, seeds and ripened berry skins.

The protein resides in the nucleus. Functionally, transcription factor involved in the regulation of gene (e.g. drought-regulated and flavonoid biosynthetic genes) expression and stomatal movements leading to negative regulation of responses to drought and responses to other physiological stimuli (e.g. light). The chain is Transcription factor MYB60 from Vitis vinifera (Grape).